A 558-amino-acid chain; its full sequence is MEAAAQFFVESPDVVYGPEAIEAQYEYRTTRVSREGGVLKVHPTSTRFTFRTARQVPRLGVMLVGWGGNNGSTLTAAVLANRLRLSWPTRSGRKEANYYGSLTQAGTVSLGLDAEGQEVFVPFSAVLPMVAPNDLVFDGWDISSLNLAEAMRRAKVLDWGLQEQLWPHMEALRPRPSVYIPEFIAANQSARADNLIPGSRAQQLEQIRRDIRDFRSSAGLDKVIVLWTANTERFCEVIPGLNDTAENLLRTIELGLEVSPSTLFAVASILEGCAFLNGSPQNTLVPGALELAWQHRVFVGGDDFKSGQTKVKSVLVDFLIGSGLKTMSIVSYNHLGNNDGENLSAPLQFRSKEVSKSNVVDDMVQSNPVLYTPGEEPDHCVVIKYVPYVGDSKRALDEYTSELMLGGTNTLVLHNTCEDSLLAAPIMLDLALLTELCQRVSFCTDMDPEPQTFHPVLSLLSFLFKAPLVPPGSPVVNALFRQRSCIENILRACVGLPPQNHMLLEHKMERPGPSLKRVGPVAATYPMLNKKGPVPAATNGCTGDANGHLQEEPPMPTT.

Residues glycine 67, glycine 68, asparagine 69, asparagine 70, aspartate 141, serine 177, valine 178, glutamine 188, arginine 191, threonine 228, alanine 229, asparagine 230, threonine 231, glycine 278, serine 279, aspartate 303, serine 306, asparagine 337, asparagine 338, aspartate 339, and lysine 352 each coordinate NAD(+). Position 279 is a phosphoserine (serine 279). Position 357 is a phosphoserine (serine 357). Positions 390, 391, 419, and 420 each coordinate NAD(+). Residues 537–558 (ATNGCTGDANGHLQEEPPMPTT) are disordered.

This sequence belongs to the myo-inositol 1-phosphate synthase family. The cofactor is NAD(+). In terms of processing, phosphorylation at Ser-279 and Ser-357 may be associated with a decrease in activity. As to expression, highly expressed in testis, ovary, heart, placenta and pancreas. Weakly expressed in blood leukocyte, thymus, skeletal muscle and colon.

It localises to the cytoplasm. The catalysed reaction is D-glucose 6-phosphate = 1D-myo-inositol 3-phosphate. The protein operates within polyol metabolism; myo-inositol biosynthesis; myo-inositol from D-glucose 6-phosphate: step 1/2. Its activity is regulated as follows. Inhibited by mood-stabilizing drugs such as valproate (VPA) and lithium. Its function is as follows. Key enzyme in myo-inositol biosynthesis pathway that catalyzes the conversion of glucose 6-phosphate to 1-myo-inositol 1-phosphate in a NAD-dependent manner. Rate-limiting enzyme in the synthesis of all inositol-containing compounds. The chain is Inositol-3-phosphate synthase 1 (ISYNA1) from Homo sapiens (Human).